Consider the following 138-residue polypeptide: Translation initiation factor 5A (138 aa).

Residue Lys37 is modified to Hypusine.

Belongs to the eIF-5A family.

It is found in the cytoplasm. Functions by promoting the formation of the first peptide bond. The protein is Translation initiation factor 5A (eif5a) of Pyrococcus horikoshii (strain ATCC 700860 / DSM 12428 / JCM 9974 / NBRC 100139 / OT-3).